A 137-amino-acid chain; its full sequence is Large ribosomal subunit protein uL16 (137 aa).

It belongs to the universal ribosomal protein uL16 family. As to quaternary structure, part of the 50S ribosomal subunit.

Binds 23S rRNA and is also seen to make contacts with the A and possibly P site tRNAs. This Baumannia cicadellinicola subsp. Homalodisca coagulata protein is Large ribosomal subunit protein uL16.